The sequence spans 339 residues: Thermospermine synthase ACAULIS5 (339 aa).

Residues 33-270 enclose the PABS domain; the sequence is CHWYEETIDD…DTWGWVMASD (238 aa). S-adenosyl 3-(methylsulfanyl)propylamine is bound by residues Gln62, Glu117, Asp137, and 168–169; that span reads DA. Asp186 functions as the Proton acceptor in the catalytic mechanism.

Belongs to the spermidine/spermine synthase family. As to expression, highly expressed in stem internodes and roots. Lower levels in young seedlings before flowering and rosette leaves. Expressed in the vascular tissues. Restricted to procambial and/or provascular cells during primary root development and early leaves development.

The enzyme catalyses S-adenosyl 3-(methylsulfanyl)propylamine + spermidine = thermospermine + S-methyl-5'-thioadenosine + H(+). Its function is as follows. Required for correct xylem specification through regulation of the lifetime of the xylem elements. Prevents premature death of the xylem vessel elements. This chain is Thermospermine synthase ACAULIS5 (ACL5), found in Arabidopsis thaliana (Mouse-ear cress).